Here is a 30-residue protein sequence, read N- to C-terminus: Trypsin inhibitor 2 (30 aa).

3 disulfide bridges follow: cysteine 2/cysteine 19, cysteine 9/cysteine 21, and cysteine 15/cysteine 27.

It belongs to the protease inhibitor I7 (squash-type serine protease inhibitor) family.

The protein localises to the secreted. Its function is as follows. Inhibits trypsin. The protein is Trypsin inhibitor 2 of Ecballium elaterium (Squirting cucumber).